The sequence spans 285 residues: MLFVLILSHRAASYGAIMAALPYMQLYIADYLADTMHLSAEEHGAYLLLMFNYWQTGKPIPKNRLAKIARLTNERWADVEPSLQEFFCDNGEEWVHLRIEEDLASVREKLTKKSAAGKASVQARRSRKEADVQTKQERNLTGVQTDVEVVFEHDVNTKATNKDTDKDLKTDPPLNPPRGNRGVKKFDPLDITLPNWISVSLWREWVEFRQALRKPIRTEQGANGAIRELEKFRQQGFSPEQVIRHSIANEYQGLFAPKGVRPETLLRQVNTVSLPDSAIPPGFRG.

Disordered stretches follow at residues 115-139 (AAGK…QERN) and 152-183 (EHDV…NRGV). 2 stretches are compositionally biased toward basic and acidic residues: residues 128 to 138 (KEADVQTKQER) and 152 to 170 (EHDV…DLKT).

This is an uncharacterized protein from Escherichia coli (strain K12).